The following is a 397-amino-acid chain: Argininosuccinate synthase (397 aa).

Residue 9–17 (AYSGGLDTS) participates in ATP binding. L-citrulline is bound at residue tyrosine 86. Glycine 116 lines the ATP pocket. Residues threonine 118, asparagine 122, and aspartate 123 each contribute to the L-aspartate site. Position 122 (asparagine 122) interacts with L-citrulline. Positions 126, 174, 259, and 271 each coordinate L-citrulline.

This sequence belongs to the argininosuccinate synthase family. Type 1 subfamily. In terms of assembly, homotetramer.

It localises to the cytoplasm. It carries out the reaction L-citrulline + L-aspartate + ATP = 2-(N(omega)-L-arginino)succinate + AMP + diphosphate + H(+). It functions in the pathway amino-acid biosynthesis; L-arginine biosynthesis; L-arginine from L-ornithine and carbamoyl phosphate: step 2/3. This Lactococcus lactis subsp. cremoris (strain SK11) protein is Argininosuccinate synthase.